Reading from the N-terminus, the 274-residue chain is Penicillin-insensitive murein endopeptidase (274 aa).

The N-terminal stretch at 1-19 (MNKTAIALLALLASSVSLA) is a signal peptide. 3 disulfide bridges follow: Cys44–Cys265, Cys187–Cys235, and Cys216–Cys223. His110, His113, Asp120, Asp147, His150, and His211 together coordinate Zn(2+). The segment at 227-274 (PLPPPGDGCGAELQSWFEPPKPGTTKPEKKTPPPLPPSCQALLDEHVI) is disordered.

The protein belongs to the peptidase M74 family. In terms of assembly, dimer. Zn(2+) serves as cofactor.

The protein resides in the periplasm. Functionally, murein endopeptidase that cleaves the D-alanyl-meso-2,6-diamino-pimelyl amide bond that connects peptidoglycan strands. Likely plays a role in the removal of murein from the sacculus. In Shigella dysenteriae serotype 1 (strain Sd197), this protein is Penicillin-insensitive murein endopeptidase.